A 272-amino-acid polypeptide reads, in one-letter code: Phosphoglycolate phosphatase (272 aa).

D19 serves as the catalytic Nucleophile. Residues D19, D21, and D182 each coordinate Mg(2+).

This sequence belongs to the HAD-like hydrolase superfamily. CbbY/CbbZ/Gph/YieH family. Requires Mg(2+) as cofactor.

The enzyme catalyses 2-phosphoglycolate + H2O = glycolate + phosphate. It functions in the pathway organic acid metabolism; glycolate biosynthesis; glycolate from 2-phosphoglycolate: step 1/1. Its function is as follows. Specifically catalyzes the dephosphorylation of 2-phosphoglycolate. Is involved in the dissimilation of the intracellular 2-phosphoglycolate formed during the DNA repair of 3'-phosphoglycolate ends, a major class of DNA lesions induced by oxidative stress. This is Phosphoglycolate phosphatase from Pseudomonas fluorescens (strain Pf0-1).